A 423-amino-acid polypeptide reads, in one-letter code: Glycine amidinotransferase, mitochondrial (423 aa).

The N-terminal 43 residues, 1–43 (MLRVRCLRGGSRGAEAVHYIGSRLGRTLTGWVQRTFQSTQAAT), are a transit peptide targeting the mitochondrion. Residues 43–63 (TASSRNSFAADDKATEPLPKD) form a disordered region. 2 positions are modified to phosphoserine: serine 46 and serine 49. Over residues 52–61 (ADDKATEPLP) the composition is skewed to basic and acidic residues. Aspartate 170 lines the arginine pocket. Catalysis depends on residues aspartate 254 and histidine 303. Arginine-binding residues include aspartate 305, arginine 322, serine 354, and serine 355. Lysine 385 is subject to N6-acetyllysine. The active-site Amidino-cysteine intermediate is the cysteine 407.

The protein belongs to the amidinotransferase family. As to quaternary structure, homodimer.

It is found in the mitochondrion inner membrane. The catalysed reaction is L-arginine + glycine = guanidinoacetate + L-ornithine. It catalyses the reaction 4-aminobutanoate + L-arginine = 4-guanidinobutanoate + L-ornithine. It carries out the reaction beta-alanine + L-arginine = 3-guanidinopropanoate + L-ornithine. The enzyme catalyses taurine + L-arginine = taurocyamine + L-ornithine. It functions in the pathway amine and polyamine biosynthesis; creatine biosynthesis; creatine from L-arginine and glycine: step 1/2. Its function is as follows. Transamidinase that catalyzes the transfer of the amidino group of L-arginine onto the amino moiety of acceptor metabolites such as glycine, beta-alanine, gamma-aminobutyric acid (GABA) and taurine yielding the corresponding guanidine derivatives. Catalyzes the rate-limiting step of creatine biosynthesis, namely the transfer of the amidino group from L-arginine to glycine to generate guanidinoacetate, which is then methylated by GAMT to form creatine. Provides creatine as a source for ATP generation in tissues with high energy demands, in particular skeletal muscle, heart and brain. This Macaca fascicularis (Crab-eating macaque) protein is Glycine amidinotransferase, mitochondrial (GATM).